A 287-amino-acid chain; its full sequence is GTPase Era (287 aa).

In terms of domain architecture, Era-type G spans 11–174 (RSGFVAVIGR…RSYLASSLPE (164 aa)). GTP-binding positions include 19-26 (GRTNVGKS) and 66-70 (DTPGI). The 69-residue stretch at 205–273 (LRDELPQALA…PLTLRVKVQR (69 aa)) folds into the KH type-2 domain.

It belongs to the TRAFAC class TrmE-Era-EngA-EngB-Septin-like GTPase superfamily. Era GTPase family. In terms of assembly, monomer.

It is found in the cytoplasm. Its subcellular location is the cell membrane. Functionally, an essential GTPase that binds both GDP and GTP, with rapid nucleotide exchange. Plays a role in 16S rRNA processing and 30S ribosomal subunit biogenesis and possibly also in cell cycle regulation and energy metabolism. This Acidimicrobium ferrooxidans (strain DSM 10331 / JCM 15462 / NBRC 103882 / ICP) protein is GTPase Era.